The sequence spans 730 residues: Translation factor GUF1 homolog, mitochondrial (730 aa).

In terms of domain architecture, tr-type G spans 106-289 (ELIRNFCIIA…AVVVSIPPPK (184 aa)). Residues 115 to 122 (AHVDHGKS), 182 to 186 (DTPGH), and 236 to 239 (NKID) contribute to the GTP site.

Belongs to the TRAFAC class translation factor GTPase superfamily. Classic translation factor GTPase family. LepA subfamily.

It localises to the mitochondrion inner membrane. The catalysed reaction is GTP + H2O = GDP + phosphate + H(+). Its function is as follows. Promotes mitochondrial protein synthesis. May act as a fidelity factor of the translation reaction, by catalyzing a one-codon backward translocation of tRNAs on improperly translocated ribosomes. Binds to mitochondrial ribosomes in a GTP-dependent manner. The sequence is that of Translation factor GUF1 homolog, mitochondrial from Theileria annulata.